A 371-amino-acid polypeptide reads, in one-letter code: MKIGIPKEIKNNENRVGLSPSGVHALVDQGHEVLVETNAGLGSYFEDGDYQEAGAKIVDEQSKAWDVDMVIKVKEPLESEYKFFKEELILFTYLHLANEQKLTQALVDNKVISIAYETVQLPDGSLPLLTPMSEVAGRMSTQVGAEFLQRFNGGMGILLGGIPGVPKGKVTIIGGGQAGTNAAKIALGLGAEVTILDVNPKRLEELEDLFDGRVRTIMSNPLNIEMYVKESDLVIGAVLIPGAKAPNLVTEDMIKEMKDGSVIVDIAIDQGGIFETTDKITTHDNPTYTKHGVVHYAVANMPGAVPRTSTIGLNNATLPYAQLLANKGYREAFKVNHPLSLGLNTFNGHVTNKNVADTFNFEYTSIEDALK.

R15 and K74 together coordinate substrate. The active-site Proton donor/acceptor is H95. NAD(+)-binding positions include S133, 177–178 (QA), D197, S219, 238–239 (VL), 266–269 (IAID), and 298–301 (VANM). D269 acts as the Proton donor/acceptor in catalysis.

This sequence belongs to the AlaDH/PNT family. Homohexamer. Trimer of dimer.

It catalyses the reaction L-alanine + NAD(+) + H2O = pyruvate + NH4(+) + NADH + H(+). It functions in the pathway amino-acid degradation; L-alanine degradation via dehydrogenase pathway; NH(3) and pyruvate from L-alanine: step 1/1. Its function is as follows. Catalyzes the reversible reductive amination of pyruvate to L-alanine. May play a role in cell wall synthesis as L-alanine is an important constituent of the peptidoglycan layer. In Staphylococcus epidermidis (strain ATCC 35984 / DSM 28319 / BCRC 17069 / CCUG 31568 / BM 3577 / RP62A), this protein is Alanine dehydrogenase (ald).